The following is a 459-amino-acid chain: Carbonic anhydrase 9 (459 aa).

The signal sequence occupies residues 1–37 (MAPLCPSPWLPLLIPAPAPGLTVQLLLSLLLLVPVHP). Positions 38 to 112 (QRLPRMQEDS…EEEGSLKLED (75 aa)) are proteoglycan-like (PG). At 38–414 (QRLPRMQEDS…QLNSCLAAGD (377 aa)) the chain is on the extracellular side. Positions 42-154 (RMQEDSPLGG…GDPPWPRVSP (113 aa)) are disordered. Positions 55–95 (GEDDPLGEEDLPSEEDSPREEDPPGEEDLPGEEDLPGEEDL) are enriched in acidic residues. The span at 96–112 (PEVKPKSEEEGSLKLED) shows a compositional bias: basic and acidic residues. Threonine 115 is a glycosylation site (O-linked (GlcNAc...) threonine). A compositionally biased stretch (basic and acidic residues) spans 129 to 140 (AHRDKEGDDQSH). The tract at residues 138–391 (QSHWRYGGDP…NGRVIEASFP (254 aa)) is catalytic. Residues 139–390 (SHWRYGGDPP…LNGRVIEASF (252 aa)) form the Alpha-carbonic anhydrase domain. Residues cysteine 156 and cysteine 336 are joined by a disulfide bond. Histidine 200 (proton donor/acceptor) is an active-site residue. Zn(2+) is bound by residues histidine 226, histidine 228, and histidine 251. Position 332–333 (332–333 (TT)) interacts with substrate. A glycan (N-linked (GlcNAc...) asparagine) is linked at asparagine 346. Residues 415–435 (ILALVFGLLFAVTSVAFLVQM) traverse the membrane as a helical segment. At 436-459 (RRQHRRGTKGGVSYRPAEVAETGA) the chain is on the cytoplasmic side. A Phosphotyrosine modification is found at tyrosine 449.

The protein belongs to the alpha-carbonic anhydrase family. As to quaternary structure, forms oligomers linked by disulfide bonds. The cofactor is Zn(2+). In terms of processing, asn-346 bears high-mannose type glycan structures. Expressed primarily in carcinoma cells lines. Expression is restricted to very few normal tissues and the most abundant expression is found in the epithelial cells of gastric mucosa.

The protein resides in the nucleus. It localises to the nucleolus. Its subcellular location is the cell membrane. It is found in the cell projection. The protein localises to the microvillus membrane. It carries out the reaction hydrogencarbonate + H(+) = CO2 + H2O. With respect to regulation, inhibited by coumarins, saccharin, sulfonamide derivatives such as acetazolamide (AZA) and Foscarnet (phosphonoformate trisodium salt). Functionally, catalyzes the interconversion between carbon dioxide and water and the dissociated ions of carbonic acid (i.e. bicarbonate and hydrogen ions). The polypeptide is Carbonic anhydrase 9 (CA9) (Homo sapiens (Human)).